A 198-amino-acid polypeptide reads, in one-letter code: Nucleoid occlusion factor SlmA (198 aa).

An HTH tetR-type domain is found at 10 to 70 (NRREEILQSL…SLIEFIEDSL (61 aa)). Positions 33 to 52 (TTAKLAASVGVSEAALYRHF) form a DNA-binding region, H-T-H motif. Residues 117 to 144 (EQDRLQGRINQLFERIEAQLRQVLREKR) are a coiled coil.

It belongs to the nucleoid occlusion factor SlmA family. As to quaternary structure, homodimer. Interacts with FtsZ.

The protein resides in the cytoplasm. It is found in the nucleoid. Its function is as follows. Required for nucleoid occlusion (NO) phenomenon, which prevents Z-ring formation and cell division over the nucleoid. Acts as a DNA-associated cell division inhibitor that binds simultaneously chromosomal DNA and FtsZ, and disrupts the assembly of FtsZ polymers. SlmA-DNA-binding sequences (SBS) are dispersed on non-Ter regions of the chromosome, preventing FtsZ polymerization at these regions. The chain is Nucleoid occlusion factor SlmA from Salmonella agona (strain SL483).